A 57-amino-acid polypeptide reads, in one-letter code: Large ribosomal subunit protein bL32c (57 aa).

It belongs to the bacterial ribosomal protein bL32 family.

It is found in the plastid. The protein resides in the chloroplast. The protein is Large ribosomal subunit protein bL32c of Vitis vinifera (Grape).